We begin with the raw amino-acid sequence, 424 residues long: UDP-N-acetylglucosamine 1-carboxyvinyltransferase (424 aa).

Residue 22–23 (KN) participates in phosphoenolpyruvate binding. Arginine 93 provides a ligand contact to UDP-N-acetyl-alpha-D-glucosamine. Residue cysteine 117 is the Proton donor of the active site. Cysteine 117 carries the post-translational modification 2-(S-cysteinyl)pyruvic acid O-phosphothioketal. UDP-N-acetyl-alpha-D-glucosamine is bound by residues 122 to 126 (RPVDL), 162 to 165 (KVSV), aspartate 307, and isoleucine 329.

It belongs to the EPSP synthase family. MurA subfamily.

The protein resides in the cytoplasm. It catalyses the reaction phosphoenolpyruvate + UDP-N-acetyl-alpha-D-glucosamine = UDP-N-acetyl-3-O-(1-carboxyvinyl)-alpha-D-glucosamine + phosphate. The protein operates within cell wall biogenesis; peptidoglycan biosynthesis. In terms of biological role, cell wall formation. Adds enolpyruvyl to UDP-N-acetylglucosamine. This Haemophilus influenzae (strain PittGG) protein is UDP-N-acetylglucosamine 1-carboxyvinyltransferase.